Here is a 100-residue protein sequence, read N- to C-terminus: MSAAGEEDKKPAGGEGGGAHINLKVKGQDGNEVFFRIKRSTQLKKLMNAYCDRQSVDMNAIAFLFDGRRLRGEQTPDELEMEDGDEIDAMLHQTGGCLPA.

Residues 1–12 (MSAAGEEDKKPA) show a composition bias toward basic and acidic residues. The tract at residues 1–23 (MSAAGEEDKKPAGGEGGGAHINL) is disordered. The region spanning 19–96 (AHINLKVKGQ…IDAMLHQTGG (78 aa)) is the Ubiquitin-like domain. Glycine 96 is covalently cross-linked (Glycyl lysine isopeptide (Gly-Lys) (interchain with K-? in acceptor proteins)).

The protein belongs to the ubiquitin family. SUMO subfamily. As to quaternary structure, interacts with SAE2, SCE1 and SIZ1. Covalently attached to a number of proteins.

The protein localises to the nucleus. Its subcellular location is the cytoplasm. Ubiquitin-like protein which can be covalently attached to target lysines as a monomer. Does not seem to be involved in protein degradation and may function as an antagonist of ubiquitin in the degradation process. The sequence is that of Small ubiquitin-related modifier 1 (SUMO1) from Oryza sativa subsp. japonica (Rice).